Consider the following 151-residue polypeptide: UPF0208 membrane protein YfbV (151 aa).

The next 2 membrane-spanning stretches (helical) occupy residues 46-65 (FGIR…QIAL) and 69-91 (LGPA…WWLG).

Belongs to the UPF0208 family.

It localises to the cell inner membrane. This is UPF0208 membrane protein YfbV (yfbV) from Photorhabdus temperata.